A 295-amino-acid chain; its full sequence is Tyrosine recombinase XerD (295 aa).

Residues 1–85 (MNTIIEEYLN…TIRSFHQFAL (85 aa)) form the Core-binding (CB) domain. One can recognise a Tyr recombinase domain in the interval 106-289 (KLPDVLEIDE…SKSQIRKMYT (184 aa)). Active-site residues include R146, K170, H241, R244, and H267. The active-site O-(3'-phospho-DNA)-tyrosine intermediate is the Y276.

It belongs to the 'phage' integrase family. XerD subfamily. As to quaternary structure, forms a cyclic heterotetrameric complex composed of two molecules of XerC and two molecules of XerD.

It is found in the cytoplasm. In terms of biological role, site-specific tyrosine recombinase, which acts by catalyzing the cutting and rejoining of the recombining DNA molecules. The XerC-XerD complex is essential to convert dimers of the bacterial chromosome into monomers to permit their segregation at cell division. It also contributes to the segregational stability of plasmids. The protein is Tyrosine recombinase XerD of Staphylococcus epidermidis (strain ATCC 35984 / DSM 28319 / BCRC 17069 / CCUG 31568 / BM 3577 / RP62A).